The sequence spans 353 residues: MPMSRAPRTARAELPKGAQARHVPVLLAEVLAALSLDRPGLAVDGTFGAGGYTRALLEAGPEVRVIAIDRDPTAIRGGADLVNAFGGRLRLVQGRFGELDTLIADQNEAQADWVVLDIGVSSMQIDEAQRGFSFRQDGPLDMRMGGEGPSAADLVNGEEETTLADILYHFGEERRSRAVARAIVEARRRAPIVTTAQLADLVAGVVRPEPGSPIHPATRSFQGLRIAVNDELGELVRGLHAAERVLKPGGRLAVVTFHSLEDRIVKQFFSARSGRAAQASRHVPGVERPAPKSFKLVTKGPVLPSEAETDVNPRSRSAKLRAGERTDAPAPPPLSAIETLASLPAPQGRGPRR.

S-adenosyl-L-methionine contacts are provided by residues 50–52 (GGY), Asp-69, Phe-96, Asp-117, and Gln-124. Positions 276–353 (AAQASRHVPG…PAPQGRGPRR (78 aa)) are disordered.

The protein belongs to the methyltransferase superfamily. RsmH family.

It is found in the cytoplasm. The catalysed reaction is cytidine(1402) in 16S rRNA + S-adenosyl-L-methionine = N(4)-methylcytidine(1402) in 16S rRNA + S-adenosyl-L-homocysteine + H(+). In terms of biological role, specifically methylates the N4 position of cytidine in position 1402 (C1402) of 16S rRNA. The sequence is that of Ribosomal RNA small subunit methyltransferase H from Methylorubrum extorquens (strain CM4 / NCIMB 13688) (Methylobacterium extorquens).